The sequence spans 292 residues: Protein-L-isoaspartate O-methyltransferase (292 aa).

The interval 1–76 (MTEKKRFPLS…AAAPSSNERA (76 aa)) is disordered. Over residues 28–48 (NRSSTSGKVATPQTATQNASQ) the composition is skewed to polar residues. The active site involves S138.

The protein belongs to the methyltransferase superfamily. L-isoaspartyl/D-aspartyl protein methyltransferase family.

It is found in the cytoplasm. The catalysed reaction is [protein]-L-isoaspartate + S-adenosyl-L-methionine = [protein]-L-isoaspartate alpha-methyl ester + S-adenosyl-L-homocysteine. Catalyzes the methyl esterification of L-isoaspartyl residues in peptides and proteins that result from spontaneous decomposition of normal L-aspartyl and L-asparaginyl residues. It plays a role in the repair and/or degradation of damaged proteins. This Janthinobacterium sp. (strain Marseille) (Minibacterium massiliensis) protein is Protein-L-isoaspartate O-methyltransferase.